Consider the following 440-residue polypeptide: Thymidine phosphorylase (440 aa).

This sequence belongs to the thymidine/pyrimidine-nucleoside phosphorylase family. Homodimer.

The catalysed reaction is thymidine + phosphate = 2-deoxy-alpha-D-ribose 1-phosphate + thymine. Its pathway is pyrimidine metabolism; dTMP biosynthesis via salvage pathway; dTMP from thymine: step 1/2. Functionally, the enzymes which catalyze the reversible phosphorolysis of pyrimidine nucleosides are involved in the degradation of these compounds and in their utilization as carbon and energy sources, or in the rescue of pyrimidine bases for nucleotide synthesis. The protein is Thymidine phosphorylase of Shigella dysenteriae serotype 1 (strain Sd197).